A 131-amino-acid polypeptide reads, in one-letter code: Aspartate 1-decarboxylase (131 aa).

Serine 25 acts as the Schiff-base intermediate with substrate; via pyruvic acid in catalysis. Serine 25 is subject to Pyruvic acid (Ser). Residue threonine 57 coordinates substrate. The active-site Proton donor is tyrosine 58. 73-75 (GAA) contacts substrate.

The protein belongs to the PanD family. Heterooctamer of four alpha and four beta subunits. The cofactor is pyruvate. In terms of processing, is synthesized initially as an inactive proenzyme, which is activated by self-cleavage at a specific serine bond to produce a beta-subunit with a hydroxyl group at its C-terminus and an alpha-subunit with a pyruvoyl group at its N-terminus.

Its subcellular location is the cytoplasm. The catalysed reaction is L-aspartate + H(+) = beta-alanine + CO2. Its pathway is cofactor biosynthesis; (R)-pantothenate biosynthesis; beta-alanine from L-aspartate: step 1/1. Its function is as follows. Catalyzes the pyruvoyl-dependent decarboxylation of aspartate to produce beta-alanine. This is Aspartate 1-decarboxylase from Anaeromyxobacter sp. (strain K).